A 118-amino-acid polypeptide reads, in one-letter code: Myotrophin (118 aa).

C2 carries the post-translational modification N-acetylcysteine. The ANK 1 repeat unit spans residues C2–R30. 3 positions are modified to N6-acetyllysine: K4, K11, and K24. T31 is subject to Phosphothreonine. ANK repeat units follow at residues G34 to K66 and H67 to P99.

It belongs to the myotrophin family. As to quaternary structure, interacts with the heterodimer formed by CAPZA1 and CAPZB. Interacts with RELA.

The protein resides in the cytoplasm. The protein localises to the nucleus. It localises to the perinuclear region. Plays a role in the regulation of the growth of actin filaments. Inhibits the activity of the F-actin-capping protein complex formed by the CAPZA1 and CAPZB heterodimer. Promotes dimerization of NF-kappa-B subunits and regulates NF-kappa-B transcription factor activity. Promotes growth of cardiomyocytes, but not cardiomyocyte proliferation. Promotes cardiac muscle hypertrophy. This Rattus norvegicus (Rat) protein is Myotrophin (Mtpn).